Here is a 243-residue protein sequence, read N- to C-terminus: Type II restriction enzyme NlaIV (243 aa).

It catalyses the reaction Endonucleolytic cleavage of DNA to give specific double-stranded fragments with terminal 5'-phosphates.. Its function is as follows. A P subtype restriction enzyme that recognizes the double-stranded sequence 5'-GGNNCC-3' and cleaves after N-3. The sequence is that of Type II restriction enzyme NlaIV (nlaIVR) from Neisseria lactamica.